The primary structure comprises 256 residues: Pimeloyl-[acyl-carrier protein] methyl ester esterase (256 aa).

The AB hydrolase-1 domain maps to 15–242 (HLVLLHGWGL…AAHAPFISHP (228 aa)). Residues Trp-22, 82–83 (SL), and 143–147 (FLALQ) contribute to the substrate site. Ser-82 serves as the catalytic Nucleophile. Active-site residues include Asp-207 and His-235. Residue His-235 coordinates substrate.

The protein belongs to the AB hydrolase superfamily. Carboxylesterase BioH family. As to quaternary structure, monomer.

The protein localises to the cytoplasm. It catalyses the reaction 6-carboxyhexanoyl-[ACP] methyl ester + H2O = 6-carboxyhexanoyl-[ACP] + methanol + H(+). It participates in cofactor biosynthesis; biotin biosynthesis. In terms of biological role, the physiological role of BioH is to remove the methyl group introduced by BioC when the pimeloyl moiety is complete. It allows to synthesize pimeloyl-ACP via the fatty acid synthetic pathway through the hydrolysis of the ester bonds of pimeloyl-ACP esters. The protein is Pimeloyl-[acyl-carrier protein] methyl ester esterase of Escherichia coli O6:K15:H31 (strain 536 / UPEC).